A 660-amino-acid chain; its full sequence is Leucine-rich repeat transmembrane protein FLRT2 (660 aa).

A signal peptide spans 1 to 35 (MGLQTAKWPSHGTFVLKFWLIMSLGLYSHVSKLLA). Disulfide bonds link cysteine 36/cysteine 42 and cysteine 40/cysteine 49. The region spanning 36 to 67 (CPSVCRCDRNFVYCNERSLTSVPLGIPEGVTV) is the LRRNT domain. Residues 36-540 (CPSVCRCDRN…QTTSHTMGSP (505 aa)) lie on the Extracellular side of the membrane. LRR repeat units lie at residues 62 to 87 (PEGV…LHNV), 88 to 108 (QSVH…MNLP), 109 to 131 (KNVR…ALAQ), 132 to 157 (LLKL…AFRE), 159 to 181 (ISLK…LPVD), 183 to 202 (QELR…AFQN), 203 to 228 (LTSL…TFSH), 229 to 251 (LTKL…DLPG), 252 to 274 (THLI…AFAN), and 275 to 298 (LRKL…VFDH). N-linked (GlcNAc...) asparagine glycosylation is present at asparagine 202. Intrachain disulfides connect cysteine 314–cysteine 339 and cysteine 316–cysteine 360. Positions 338-361 (MCQGPEQVRGMAVRELNMNLLSCP) constitute an LRRCT domain. Low complexity predominate over residues 372 to 396 (PAPSTVSPTTQSPTVSVPSPSRGSV). Residues 372–413 (PAPSTVSPTTQSPTVSVPSPSRGSVPPAPAPSKLPTIPDWDG) are disordered. Positions 419–517 (PPISERIQLS…ICSEATTHAS (99 aa)) constitute a Fibronectin type-III domain. The chain crosses the membrane as a helical span at residues 541 to 561 (FLLAGLIGGAVIFVLVVLLSV). At 562–660 (FCWHMHKKGR…SVPDLEHCHT (99 aa)) the chain is on the cytoplasmic side.

In terms of assembly, self-associates (via leucine-rich repeats), giving rise to homooligomers. Interacts with FGFR1. Interacts with FGFR2. Interacts (via extracellular domain) with ADGRL1/LPHN1. Interacts (via extracellular domain) with ADGRL3 (via olfactomedin-like domain). Interacts (via extracellular domain) with UNC5D (via the first Ig-like domain). Can also interact (via extracellular domain) with UNC5B, but with much lower affinity. Interacts (via extracellular domain) with FN1. In terms of processing, N-glycosylated. Post-translationally, proteolytic cleavage in the juxtamembrane region gives rise to a soluble ectodomain. Cleavage is probably effected by a metalloprotease. As to expression, detected in brain (at protein level).

Its subcellular location is the cell membrane. The protein resides in the endoplasmic reticulum membrane. It is found in the synapse. It localises to the synaptosome. The protein localises to the cell junction. Its subcellular location is the focal adhesion. The protein resides in the secreted. It is found in the extracellular space. It localises to the extracellular matrix. The protein localises to the microsome membrane. Functions in cell-cell adhesion, cell migration and axon guidance. Mediates cell-cell adhesion via its interactions with ADGRL3 and probably also other latrophilins that are expressed at the surface of adjacent cells. May play a role in the migration of cortical neurons during brain development via its interaction with UNC5D. Mediates axon growth cone collapse and plays a repulsive role in neuron guidance via its interaction with UNC5D, and possibly also other UNC-5 family members. Plays a role in fibroblast growth factor-mediated signaling cascades. Required for normal organization of the cardiac basement membrane during embryogenesis, and for normal embryonic epicardium and heart morphogenesis. The sequence is that of Leucine-rich repeat transmembrane protein FLRT2 from Rattus norvegicus (Rat).